The primary structure comprises 462 residues: Chromosomal replication initiator protein DnaA (462 aa).

A domain I, interacts with DnaA modulators region spans residues 1-83 (MSLSLWQQCL…LRFEVGSKPA (83 aa)). The tract at residues 83–125 (AVRAHSHPVTASVSAPVAPVTRSAPVRPSWDSSPAQPELSYRS) is domain II. The tract at residues 105–127 (SAPVRPSWDSSPAQPELSYRSNV) is disordered. Polar residues predominate over residues 112-127 (WDSSPAQPELSYRSNV). The domain III, AAA+ region stretch occupies residues 126–342 (NVNPKHTFDN…GALNRVIANA (217 aa)). Residues G170, G172, K173, and T174 each coordinate ATP. The interval 343-462 (NFTGRAITID…FSNLIRTLSS (120 aa)) is domain IV, binds dsDNA.

The protein belongs to the DnaA family. As to quaternary structure, oligomerizes as a right-handed, spiral filament on DNA at oriC.

The protein resides in the cytoplasm. Functionally, plays an essential role in the initiation and regulation of chromosomal replication. ATP-DnaA binds to the origin of replication (oriC) to initiate formation of the DNA replication initiation complex once per cell cycle. Binds the DnaA box (a 9 base pair repeat at the origin) and separates the double-stranded (ds)DNA. Forms a right-handed helical filament on oriC DNA; dsDNA binds to the exterior of the filament while single-stranded (ss)DNA is stabiized in the filament's interior. The ATP-DnaA-oriC complex binds and stabilizes one strand of the AT-rich DNA unwinding element (DUE), permitting loading of DNA polymerase. After initiation quickly degrades to an ADP-DnaA complex that is not apt for DNA replication. Binds acidic phospholipids. The polypeptide is Chromosomal replication initiator protein DnaA (Yersinia enterocolitica serotype O:8 / biotype 1B (strain NCTC 13174 / 8081)).